Consider the following 104-residue polypeptide: Iron-sulfur cluster assembly protein CyaY (104 aa).

The protein belongs to the frataxin family.

Functionally, involved in iron-sulfur (Fe-S) cluster assembly. May act as a regulator of Fe-S biogenesis. This is Iron-sulfur cluster assembly protein CyaY from Vibrio vulnificus (strain CMCP6).